The chain runs to 478 residues: Sugar transporter ERD6-like 18 (478 aa).

The next 12 helical transmembrane spans lie at 31–51, 71–91, 110–130, 133–153, 162–180, 188–208, 270–290, 306–326, 333–353, 367–387, 407–427, and 433–453; these read ITAC…SFGV, IAQF…GALF, LLCI…WLNF, ISSG…IAEI, FTFT…VYFS, ILAL…FFVP, TLVV…SAVL, IGST…VILV, PLLL…GVAF, VFTF…LGGL, IVTL…NFLL, and GTFY…WLLV.

Belongs to the major facilitator superfamily. Sugar transporter (TC 2.A.1.1) family. Expressed in leaf vasculature, stem and flowers.

It is found in the membrane. Its function is as follows. Sugar transporter. This Arabidopsis thaliana (Mouse-ear cress) protein is Sugar transporter ERD6-like 18 (SFP2).